We begin with the raw amino-acid sequence, 405 residues long: Squamosa promoter-binding-like protein 6 (405 aa).

The SBP-type zinc finger occupies 121–198 (NPLCQVYGCS…AGHNERRRKP (78 aa)). Zn(2+) contacts are provided by C124, C129, C146, H149, C165, C168, H172, and C184. The Bipartite nuclear localization signal motif lies at 181 to 197 (KRSCRRRLAGHNERRRK).

Zn(2+) serves as cofactor.

It localises to the nucleus. Its function is as follows. Trans-acting factor that binds specifically to the consensus nucleotide sequence 5'-TNCGTACAA-3'. In Arabidopsis thaliana (Mouse-ear cress), this protein is Squamosa promoter-binding-like protein 6 (SPL6).